We begin with the raw amino-acid sequence, 390 residues long: Neuromedin-B receptor (390 aa).

Over 1 to 44 the chain is Extracellular; sequence MPPKSLSNLSQTAGVNQSGFFPGASERDFLPATDRTTAEFVIRC. 2 N-linked (GlcNAc...) asparagine glycosylation sites follow: Asn-8 and Asn-16. The helical transmembrane segment at 45 to 65 threads the bilayer; it reads VIPSLYLLIITVGLLGNIVLV. The Cytoplasmic portion of the chain corresponds to 66 to 76; sequence KIFLTNSAMRS. Residues 77–97 traverse the membrane as a helical segment; that stretch reads VPNIFISNLAAGDVLLLLTCV. Topologically, residues 98 to 117 are extracellular; the sequence is PVDASRYFLDEWMFGKVGCK. Residues Cys-116 and Cys-198 are joined by a disulfide bond. A helical membrane pass occupies residues 118-138; the sequence is LIPVIQLTSVGVSVFTLTALS. Residues 139-155 lie on the Cytoplasmic side of the membrane; the sequence is ADRYRAIVNPMDIQTSG. A helical membrane pass occupies residues 156-176; sequence AVLWTCVKAGGIWVVSVLLAV. The Extracellular portion of the chain corresponds to 177 to 210; sequence PEAVFSEVARIDGLDNGSFTACIPYPQTDELHPK. Residue Asn-192 is glycosylated (N-linked (GlcNAc...) asparagine). A helical membrane pass occupies residues 211–231; that stretch reads IHSVLIFLVYFLIPLGIISVY. Residues 232-266 lie on the Cytoplasmic side of the membrane; it reads YYHIAKTLIKSAHNLPGEYNEHTKKQMETRKRLAK. Residues 267-287 form a helical membrane-spanning segment; sequence IVLVFVGCFVFCWFPNHILYM. At 288–305 the chain is on the extracellular side; sequence YRSFNYNEIDPSLGHMIV. A helical transmembrane segment spans residues 306 to 328; that stretch reads TLVARVLSFCNSCVNPFALYLLS. Residues 329-390 are Cytoplasmic-facing; sequence ESFRKHFNNQ…GHSVKQEMAL (62 aa). Cys-341 carries the S-palmitoyl cysteine lipid modification. Ser-352 carries the phosphoserine modification.

This sequence belongs to the G-protein coupled receptor 1 family. As to expression, highly expressed in peripheral tissues where it is detected in the respiratory system, circulatory system, digestive system, urogenital system, lymphatic organs and endocrine system (at protein level). In the testis, expressed mainly in Leydig cells (at protein level).

It localises to the cell membrane. Receptor for neuromedin-B. Contributes to the maintenance of basal sigh rate through signaling in the pre-Botzinger complex, a cluster of several thousand neurons in the ventrolateral medulla responsible for inspiration during respiratory activity. Contributes to the induction of sneezing following exposure to chemical irritants or allergens which causes release of NMB by nasal sensory neurons and activation of NMBR-expressing neurons in the sneeze-evoking region of the brainstem. These in turn activate neurons of the caudal ventral respiratory group, giving rise to the sneezing response. Contributes to induction of acute itch, possibly through its activation on dorsal root ganglion neurons by the NMB peptide. Plays a role in the innate immune response to influenza A virus infection by enhancing interferon alpha expression and reducing expression of IL6. Plays a role in CSF1-induced proliferation of osteoclast precursors by contributing to the positive regulation of the expression of the CSF1 receptor CSF1R. In Sus scrofa (Pig), this protein is Neuromedin-B receptor (NMBR).